Reading from the N-terminus, the 329-residue chain is Thioredoxin-like fold domain-containing protein MRL7L homolog, chloroplastic (329 aa).

The transit peptide at methionine 1–arginine 46 directs the protein to the chloroplast. Positions alanine 58 to glutamate 91 are disordered. The span at serine 72–proline 85 shows a compositional bias: acidic residues.

Its subcellular location is the plastid. It is found in the chloroplast stroma. Plays an essential role in early steps of chloroplast development. Involved in the regulation of plastid gene expression. Required for the proper function of the plastid transcriptional machinery and protein accumulation in thylakoid membranes. May function as molecular chaperone to ensure proper organization of the nucleoids in chloroplasts. This Oryza sativa subsp. japonica (Rice) protein is Thioredoxin-like fold domain-containing protein MRL7L homolog, chloroplastic.